The sequence spans 864 residues: Eukaryotic translation initiation factor 3 subunit C (864 aa).

A disordered region spans residues 1–77; sequence MSRFFARGGS…EESEDEERVT (77 aa). The segment covering 14–54 has biased composition (acidic residues); the sequence is SSSEDEQELYSDREEEEQFSDSEEESSEAESSEEESSDDEG. In terms of domain architecture, PCI spans 602-776; that stretch reads FHMHINLELL…NAIVFRKGVE (175 aa). Residues 815–864 form a disordered region; the sequence is RDQGAGARGGRGAGRGGQARGGPRFPGGQQGRRPGGQQFSGGALGGAIKA. Residues 820–864 show a composition bias toward gly residues; the sequence is GARGGRGAGRGGQARGGPRFPGGQQGRRPGGQQFSGGALGGAIKA.

The protein belongs to the eIF-3 subunit C family. In terms of assembly, component of the eukaryotic translation initiation factor 3 (eIF-3) complex.

It is found in the cytoplasm. Its function is as follows. Component of the eukaryotic translation initiation factor 3 (eIF-3) complex, which is involved in protein synthesis of a specialized repertoire of mRNAs and, together with other initiation factors, stimulates binding of mRNA and methionyl-tRNAi to the 40S ribosome. The eIF-3 complex specifically targets and initiates translation of a subset of mRNAs involved in cell proliferation. This chain is Eukaryotic translation initiation factor 3 subunit C (nip1), found in Aspergillus terreus (strain NIH 2624 / FGSC A1156).